A 226-amino-acid polypeptide reads, in one-letter code: uncharacterized protein (226 aa).

Belongs to the HisA/HisF family.

This is an uncharacterized protein from Methanocaldococcus jannaschii (strain ATCC 43067 / DSM 2661 / JAL-1 / JCM 10045 / NBRC 100440) (Methanococcus jannaschii).